A 244-amino-acid polypeptide reads, in one-letter code: Probable Ni/Fe-hydrogenase B-type cytochrome subunit (244 aa).

The next 4 helical transmembrane spans lie at L39–G59, F73–M93, F150–Y171, and L204–I221.

Belongs to the HupC/HyaC/HydC family.

Its subcellular location is the cell membrane. Functionally, probable b-type cytochrome. This Cupriavidus necator (strain ATCC 17699 / DSM 428 / KCTC 22496 / NCIMB 10442 / H16 / Stanier 337) (Ralstonia eutropha) protein is Probable Ni/Fe-hydrogenase B-type cytochrome subunit (hoxZ).